An 85-amino-acid polypeptide reads, in one-letter code: UPF0386 protein RHECIAT_CH0001945 (85 aa).

It belongs to the UPF0386 family.

This is UPF0386 protein RHECIAT_CH0001945 from Rhizobium etli (strain CIAT 652).